The primary structure comprises 104 residues: L-rhamnose mutarotase (104 aa).

Tyr18 contributes to the substrate binding site. Residue His22 is the Proton donor of the active site. Substrate contacts are provided by residues Tyr41 and 76–77; that span reads WW.

It belongs to the rhamnose mutarotase family. Homodimer.

It is found in the cytoplasm. The catalysed reaction is alpha-L-rhamnose = beta-L-rhamnose. It participates in carbohydrate metabolism; L-rhamnose metabolism. Involved in the anomeric conversion of L-rhamnose. This is L-rhamnose mutarotase from Escherichia coli O127:H6 (strain E2348/69 / EPEC).